The chain runs to 61 residues: Photosystem II reaction center protein K (61 aa).

The propeptide occupies 1–24 (MLNTFSLIGICLNSTLFSSSFFFG). The helical transmembrane segment at 36-56 (IVDIMPVIPLFFFLLAFVWQA) threads the bilayer.

The protein belongs to the PsbK family. PSII is composed of 1 copy each of membrane proteins PsbA, PsbB, PsbC, PsbD, PsbE, PsbF, PsbH, PsbI, PsbJ, PsbK, PsbL, PsbM, PsbT, PsbX, PsbY, PsbZ, Psb30/Ycf12, at least 3 peripheral proteins of the oxygen-evolving complex and a large number of cofactors. It forms dimeric complexes.

The protein resides in the plastid. The protein localises to the chloroplast thylakoid membrane. Its function is as follows. One of the components of the core complex of photosystem II (PSII). PSII is a light-driven water:plastoquinone oxidoreductase that uses light energy to abstract electrons from H(2)O, generating O(2) and a proton gradient subsequently used for ATP formation. It consists of a core antenna complex that captures photons, and an electron transfer chain that converts photonic excitation into a charge separation. This Nicotiana tomentosiformis (Tobacco) protein is Photosystem II reaction center protein K.